We begin with the raw amino-acid sequence, 367 residues long: Peptide chain release factor 2 (367 aa).

Q254 carries the N5-methylglutamine modification.

This sequence belongs to the prokaryotic/mitochondrial release factor family. In terms of processing, methylated by PrmC. Methylation increases the termination efficiency of RF2.

It is found in the cytoplasm. Functionally, peptide chain release factor 2 directs the termination of translation in response to the peptide chain termination codons UGA and UAA. In Burkholderia mallei (strain ATCC 23344), this protein is Peptide chain release factor 2.